We begin with the raw amino-acid sequence, 341 residues long: Biotin synthase (341 aa).

In terms of domain architecture, Radical SAM core spans 40–264; the sequence is NSVKLNYLVN…VAPRSELRIA (225 aa). Residues Cys-55, Cys-59, and Cys-62 each coordinate [4Fe-4S] cluster. [2Fe-2S] cluster is bound by residues Cys-99, Cys-132, Cys-192, and Arg-262. Residues 317 to 341 are disordered; sequence ASAPQGGVEPVLRKRGAGTELQPNA.

Belongs to the radical SAM superfamily. Biotin synthase family. As to quaternary structure, homodimer. Requires [4Fe-4S] cluster as cofactor. It depends on [2Fe-2S] cluster as a cofactor.

The catalysed reaction is (4R,5S)-dethiobiotin + (sulfur carrier)-SH + 2 reduced [2Fe-2S]-[ferredoxin] + 2 S-adenosyl-L-methionine = (sulfur carrier)-H + biotin + 2 5'-deoxyadenosine + 2 L-methionine + 2 oxidized [2Fe-2S]-[ferredoxin]. It participates in cofactor biosynthesis; biotin biosynthesis; biotin from 7,8-diaminononanoate: step 2/2. Functionally, catalyzes the conversion of dethiobiotin (DTB) to biotin by the insertion of a sulfur atom into dethiobiotin via a radical-based mechanism. This chain is Biotin synthase, found in Renibacterium salmoninarum (strain ATCC 33209 / DSM 20767 / JCM 11484 / NBRC 15589 / NCIMB 2235).